The primary structure comprises 568 residues: Poly(A) polymerase (568 aa).

Residues 87–89, 99–102, 100–102, Asp154, Lys215, Tyr224, and 233–234 contribute to the ATP site; these read YGS, SDID, DID, and GV. Residues Asp100, Asp102, and Asp154 each coordinate Mg(2+). Phosphoserine is present on residues Ser452 and Ser550. The tract at residues 525–568 is disordered; that stretch reads NEKRPSKKSKRKNLDARHETVKRSKSDAASGDNINGTTAAVDVN. Residues 536-550 are compositionally biased toward basic and acidic residues; that stretch reads KNLDARHETVKRSKS.

Belongs to the poly(A) polymerase family. In terms of assembly, component of the cleavage and polyadenylation factor (CPF) complex, which is composed of PTI1, SYC1, SSU72, GLC7, MPE1, REF2, PFS2, PTA1, YSH1/BRR5, SWD2, CFT2/YDH1, YTH1, CFT1/YHH1, FIP1 and PAP1. Interacts with FIR1 and RRP6. Requires Mg(2+) as cofactor. It depends on Mn(2+) as a cofactor.

It is found in the nucleus. The catalysed reaction is RNA(n) + ATP = RNA(n)-3'-adenine ribonucleotide + diphosphate. Polymerase component of the cleavage and polyadenylation factor (CPF) complex, which plays a key role in polyadenylation-dependent pre-mRNA 3'-end formation and cooperates with cleavage factors including the CFIA complex and NAB4/CFIB. In Saccharomyces cerevisiae (strain ATCC 204508 / S288c) (Baker's yeast), this protein is Poly(A) polymerase (PAP1).